The primary structure comprises 294 residues: Protein huluwa (294 aa).

The Extracellular segment spans residues 1 to 23; it reads MSQLGSAVPSSNLPEGLPVSSLA. Residues 24-44 traverse the membrane as a helical segment; sequence LLILVLIPCVLLLLLLNCLFV. At 45–294 the chain is on the cytoplasmic side; the sequence is GYKLFRMTRR…PPITTKQYWV (250 aa). Residues 154–175 are disordered; it reads SDSDMERVNTVPPNSPVLRVTP. The VPPNSP motif motif lies at 164–169; the sequence is VPPNSP. The SLRRSST motif motif lies at 184–190; sequence SLRRSST.

The protein belongs to the huluwa family. Interacts with axin1; leading to promote the tankyrase-mediated degradation of axin. Interacts with axin2; leading to promote the tankyrase-mediated degradation of axin.

It is found in the cell membrane. Its function is as follows. Key maternal determinant of the dorsal organizer and body axis formation in vertebrates that acts by promoting stabilization of beta-catenin (ctnnb1). Localizes on the plasma membrane of the future dorsal blastomeres in early blastulas and binds to and promotes the tankyrase-mediated degradation of axin (axin1 and axin2). Axin degradation results in stabilization and nuclear translocation of beta-catenin (ctnnb1) for activating organizer-specific target gene expression. The polypeptide is Protein huluwa (Danio rerio (Zebrafish)).